Here is a 75-residue protein sequence, read N- to C-terminus: Large ribosomal subunit protein bL28 (75 aa).

Belongs to the bacterial ribosomal protein bL28 family.

The sequence is that of Large ribosomal subunit protein bL28 from Baumannia cicadellinicola subsp. Homalodisca coagulata.